A 1151-amino-acid chain; its full sequence is MNLEFSFGNLIAKNTENSTKEEGTWEVNKLMKFSSEEGRSSSDDYMFSSPDFEKAGNGDAEMREFFNFDGLPDQGLNLPSIAPPSLSHASSPNLSNSQDEAECLPSDRQQDYINPSLHLNRTVFPTPQHSISDANFLANTVDQPLGDNPMFGESDVYLLKMDPMKQAPYEAGFNSVKSSGAIEDPLQFRQPITMLETPFNESINTLTPYAEDYAFSSLNTSAPPLSNKEYAFSVNHLPAINEHKWKSRVETNMLFELRIKSNDNQSVPFEYLRLPSWAHREDKKRSSKPQPLQPDPETVIHLVPTVLAGDKSSVVKTCCTRCLLRERKRNARSQATKDACMPNYTKLKAYERNMTDASPEEKQQFRIKLLNQFPKLEDIDEDRMIMVFTGPEYVRLQLDGNERVAHINARITCYSSHQSCPYFHIIWDLYSMSRLVDRLVFPEPVTVLDDHKSRNLTKSEKTGKSNSQQAPSNHVLSKSNTVPNLVTGFPTRSDNPPNEKRRRTSSSENSRALDIQLSASDSHSPNSKSTLKSVEGSAFSMSKSPSVLSMTTPSGVSPSISKNGFHVVRVPSDAAGFQQRQQQEEGVLEAHTNESAPIAPFPYCTDDFSFSVEEKSSVNNLLTQFDEVAKPDFVSTPIKENVDSSFINMTPPDVSHAPLISRIIPNKGSIMGGYEVTILGANFFNGLVCLFGDNPAAVTFSWSESTIIATCPPATNAGTVPVTFQNYNSSSEAPVMFTYEDNLDNELYKLTVQVLGLKLTGSIQNPLTLSKKLLSSWRDDFAQYITNSIKQPPNSESKGQSKKTLLHDSNMESLKSVISRIVKKDSNQSDDSVESTILAAFALVTDTTTPYLSDFSLVNESGRSLLHLTAACGLSNASTFLCNAGCDVNKRDALGYTPLHYASLYDHKDICVNLLSNGAKPDVIGASGKKPIDLSSSEPIKLVFKEANNEQAQSISRSLIKDSEGSINTNETLESTSIVNEIEESAVQTKSYSESMWNKTVTMFPSLQELPQNYMSEVPSMMQKAMLSTLKSISAIPDDVPPPYSEFADDTTAQAGSSKRDSAISEDPDHHKSVWWSLRWQSRLVGRGKSTALTPEETRAIQEQAKTLKKAGMDFMLFSFWLPALLLLSIFGLRSYAQMIGGYLYRCIIGI.

3 disordered regions span residues 77–104 (NLPS…AECL), 452–511 (KSRN…ENSR), and 516–535 (QLSA…KSVE). A compositionally biased stretch (polar residues) spans 87–98 (SHASSPNLSNSQ). The span at 452–463 (KSRNLTKSEKTG) shows a compositional bias: basic and acidic residues. Composition is skewed to polar residues over residues 464-496 (KSNS…SDNP) and 517-532 (LSAS…STLK). In terms of domain architecture, IPT/TIG spans 658 to 739 (PLISRIIPNK…SSEAPVMFTY (82 aa)). ANK repeat units follow at residues 861–890 (SGRS…DVNK) and 894–923 (LGYT…KPDV). The interval 1041 to 1067 (PPPYSEFADDTTAQAGSSKRDSAISED) is disordered. The segment covering 1058-1067 (SKRDSAISED) has biased composition (basic and acidic residues). The chain crosses the membrane as a helical span at residues 1113–1133 (MDFMLFSFWLPALLLLSIFGL).

It localises to the vacuole membrane. The chain is Ankyrin and IPT/TIG repeat-containing protein C26H5.05 from Schizosaccharomyces pombe (strain 972 / ATCC 24843) (Fission yeast).